Consider the following 99-residue polypeptide: Large ribosomal subunit protein eL21 (99 aa).

Polar residues predominate over residues M1–K14. A disordered region spans residues M1–E38.

This sequence belongs to the eukaryotic ribosomal protein eL21 family.

The chain is Large ribosomal subunit protein eL21 from Halobacterium salinarum (strain ATCC 29341 / DSM 671 / R1).